The following is a 372-amino-acid chain: Stress-activated protein kinase JNK (372 aa).

Positions 24–320 constitute a Protein kinase domain; the sequence is YINLRPIGSG…VDEALKHEYI (297 aa). Residues 31–36 and Lys-53 each bind ATP; that span reads GSGAQG. The active-site Proton acceptor is the Asp-149. Thr-181 bears the Phosphothreonine mark. Residues 181-183 carry the TXY motif; the sequence is TPY. A Phosphotyrosine modification is found at Tyr-183.

This sequence belongs to the protein kinase superfamily. CMGC Ser/Thr protein kinase family. MAP kinase subfamily. In terms of assembly, interacts with MKP-4 (via tyrosine-protein phosphatase domain); the interaction dephosphorylates bsk. Requires Mg(2+) as cofactor. Dually phosphorylated on Thr-181 and Tyr-183, which activates the enzyme. In terms of tissue distribution, during gastrulation, expression is seen in cells undergoing morphogenetic movements. By stage 9 of embryonic development, expression is ubiquitous. At stages 12-14, expression occurs in epidermis and central nervous system. At stage 15, expression is restricted to ventral nerve cord, brain and some peripheral neurons. In larvae, expression is seen in all imaginal disks, with highest levels in wing and eye disks, and in the CNS. Adults express the protein in fat body and hemocytes.

It is found in the nucleus. The protein localises to the cytoplasm. The catalysed reaction is L-seryl-[protein] + ATP = O-phospho-L-seryl-[protein] + ADP + H(+). It carries out the reaction L-threonyl-[protein] + ATP = O-phospho-L-threonyl-[protein] + ADP + H(+). Activated by threonine and tyrosine phosphorylation by the dual specificity kinase, hep. Inhibited by dual specificity phosphatase, puckered. In terms of biological role, mitogen-activated protein kinase and key component of the c-Jun N-terminal kinase (JNK) pathway which phosphorylate and activate transcription factors involved in a wide range of biological processes including response to various stresses, cellular proliferation, differentiation and migration, and regulation of cell shape. Responds to activation by environmental stress by phosphorylating a number of transcription factors, primarily components of AP-1 such as Jra and also the transcriptional repressor aop, and thus regulates transcriptional activity. Component of the immune response activated by bacterial infection, and is involved in wound healing and in dorsal closure, a morphogenetic movement during embryogenesis. Functions in the systematic response to wounding acting downstream of the Hayan-phenoloxidase PPO1 cascade. During epidermal wound healing involved in cellular polarization by inducing the translocation of sktl and mys/integrin beta to the trailing edge. Exhibits cytoprotective activity in neuronal cells in response to wounding to the integument. Controls the expression of a phosphatase, puckered, at the edges of wounded epidermal tissue and in the dorsal epithelium during dorsal closure. Regulates the activity of SREBP in neurons and thereby the accumulation of lipids in glia. Plays a role in positively regulating the expression of DIP2 independently of AP-1, thereby ensuring proper axon guidance in mushroom bodies. In enterocytes and differentiating progenitors of the gut that are experiencing inorganic phosphate (Pi) deficiency, activated by Cka to induce nearby progenitor cells to proliferate and form new absorptive cells, probably helping the organism to cope with the nutrient deficiency by maximizing absorption of dietary Pi. This chain is Stress-activated protein kinase JNK, found in Drosophila melanogaster (Fruit fly).